Consider the following 119-residue polypeptide: Holo-[acyl-carrier-protein] synthase (119 aa).

Residues D8 and E58 each coordinate Mg(2+).

The protein belongs to the P-Pant transferase superfamily. AcpS family. Mg(2+) serves as cofactor.

Its subcellular location is the cytoplasm. It carries out the reaction apo-[ACP] + CoA = holo-[ACP] + adenosine 3',5'-bisphosphate + H(+). Transfers the 4'-phosphopantetheine moiety from coenzyme A to a Ser of acyl-carrier-protein. The chain is Holo-[acyl-carrier-protein] synthase from Streptococcus thermophilus (strain CNRZ 1066).